The sequence spans 1020 residues: FERM domain-containing protein 4A (1020 aa).

In terms of domain architecture, FERM spans 5-307 (RRCQVHLLDD…SQHQFYLDRK (303 aa)). The interval 343-405 (KGKIISGSSG…RLCLREAELT (63 aa)) is necessary for interaction with CYTH1. Residues 351 to 367 (SGSLLSSGSQESDSSQS) are compositionally biased toward low complexity. The tract at residues 351 to 371 (SGSLLSSGSQESDSSQSAKKD) is disordered. The stretch at 367-401 (SAKKDMLAALKSRQEALEETLRQRLEELKRLCLRE) forms a coiled coil. Residue serine 515 is modified to Phosphoserine. The disordered stretch occupies residues 538–665 (DEDSQVTSTI…MPSTPDLRVR (128 aa)). Over residues 542–551 (QVTSTISPLQ) the composition is skewed to polar residues. A compositionally biased stretch (pro residues) spans 556-572 (GLPPRPPSSHNRPPPPQ). Positions 565 to 920 (HNRPPPPQSL…QWYQRSTASH (356 aa)) are necessary for tight junction and adherens junction localization; Requires for interaction with PARD3. Residues serine 590 and serine 601 each carry the phosphoserine modification. The segment covering 609–624 (VKKRSSHGHSSSHKRF) has biased composition (basic residues). Residues 626–658 (STGSCTEAGVSSSLQNSPIRSLPHWNSQSSMPS) are compositionally biased toward polar residues. Serine 666 and serine 696 each carry phosphoserine. 2 disordered regions span residues 698-741 (ESQG…HSSS) and 757-810 (AEDS…QSQP). Positions 773-796 (RAAGALGSASSGSMPNLAARSGAA) are enriched in low complexity. Residues serine 785, serine 854, and serine 882 each carry the phosphoserine modification. Disordered regions lie at residues 862 to 949 (KESW…STFV) and 961 to 1020 (CKAT…STDE). Residues 893–910 (DGAHDKGSGRAAVSDELR) are compositionally biased toward basic and acidic residues. The segment covering 927–947 (SHTSSTSSDSGSQYSTSSQST) has biased composition (low complexity). Composition is skewed to polar residues over residues 967-981 (ALPQ…SSEI), 994-1004 (TWQTGEATENS), and 1011-1020 (ESPTHQSTDE).

In terms of assembly, interacts (via coiled-coil domain) with CYTH1 (via coiled-coil domain). Interacts with PARD3 (via coiled-coil domain). Found in a complex with PARD3, CYTH1 and FRMD4A. Interacts with CYTH2. Interacts with CYTH3.

It is found in the cytoplasm. The protein resides in the cytoskeleton. It localises to the cell junction. Its subcellular location is the adherens junction. The protein localises to the tight junction. Scaffolding protein that regulates epithelial cell polarity by connecting ARF6 activation with the PAR3 complex. Plays a redundant role with FRMD4B in epithelial polarization. May regulate MAPT secretion by activating ARF6-signaling. This is FERM domain-containing protein 4A (Frmd4a) from Mus musculus (Mouse).